The sequence spans 682 residues: Potassium-transporting ATPase ATP-binding subunit (682 aa).

The next 5 membrane-spanning stretches (helical) occupy residues 15-35 (AALF…AKLA), 42-62 (SPVM…TASG), 66-86 (AGFG…GNFA), 233-253 (LTFL…GVTL), and 257-277 (LLIA…LPAI). Residue Asp-310 is the 4-aspartylphosphate intermediate of the active site. Residues Asp-347, Glu-351, 377 to 384 (FTAQTRMS), and Lys-395 contribute to the ATP site. Asp-518 and Asp-522 together coordinate Mg(2+). 3 helical membrane-spanning segments follow: residues 588–608 (FAIL…LNVM), 616–636 (AVLA…PLAL), and 662–682 (VLLP…VLGA).

The protein belongs to the cation transport ATPase (P-type) (TC 3.A.3) family. Type IA subfamily. As to quaternary structure, the system is composed of three essential subunits: KdpA, KdpB and KdpC.

The protein localises to the cell inner membrane. The catalysed reaction is K(+)(out) + ATP + H2O = K(+)(in) + ADP + phosphate + H(+). In terms of biological role, part of the high-affinity ATP-driven potassium transport (or Kdp) system, which catalyzes the hydrolysis of ATP coupled with the electrogenic transport of potassium into the cytoplasm. This subunit is responsible for energy coupling to the transport system and for the release of the potassium ions to the cytoplasm. The protein is Potassium-transporting ATPase ATP-binding subunit of Xanthomonas axonopodis pv. citri (strain 306).